A 468-amino-acid polypeptide reads, in one-letter code: Hexokinase (468 aa).

The region spanning Ala-10–Asp-466 is the Hexokinase domain. The segment at Thr-74 to Val-225 is hexokinase small subdomain. Asp-85–Thr-90 contacts ATP. The tract at residues Pro-163–Phe-189 is glucose-binding. The hexokinase large subdomain stretch occupies residues Asn-226–Asp-455.

It belongs to the hexokinase family.

The catalysed reaction is a D-hexose + ATP = a D-hexose 6-phosphate + ADP + H(+). The enzyme catalyses D-mannose + ATP = D-mannose 6-phosphate + ADP + H(+). It carries out the reaction D-fructose + ATP = D-fructose 6-phosphate + ADP + H(+). It catalyses the reaction D-glucose + ATP = D-glucose 6-phosphate + ADP + H(+). The protein operates within carbohydrate metabolism; hexose metabolism. Its pathway is carbohydrate degradation; glycolysis; D-glyceraldehyde 3-phosphate and glycerone phosphate from D-glucose: step 1/4. Catalyzes the phosphorylation of various hexoses to hexose 6-phosphate. The sequence is that of Hexokinase (HXK) from Toxoplasma gondii.